Reading from the N-terminus, the 231-residue chain is 7-cyano-7-deazaguanine synthase (231 aa).

Residue 8–18 participates in ATP binding; sequence FSGGQDSTTCL. Residues C188, C197, C200, and C203 each contribute to the Zn(2+) site.

The protein belongs to the QueC family. The cofactor is Zn(2+).

It catalyses the reaction 7-carboxy-7-deazaguanine + NH4(+) + ATP = 7-cyano-7-deazaguanine + ADP + phosphate + H2O + H(+). Its pathway is purine metabolism; 7-cyano-7-deazaguanine biosynthesis. In terms of biological role, catalyzes the ATP-dependent conversion of 7-carboxy-7-deazaguanine (CDG) to 7-cyano-7-deazaguanine (preQ(0)). This chain is 7-cyano-7-deazaguanine synthase, found in Salmonella paratyphi B (strain ATCC BAA-1250 / SPB7).